Here is a 137-residue protein sequence, read N- to C-terminus: MPPKSRSTGPKKTQKTRRRDKKNIPHGAAHIKSTFNNTIVSITDPAGNVISWASSGHVGFKGSRKSTPFAAQLAAESAARKAQEHGVKKVDVFVKGPGSGRETAIRSLQAAGLEVGTISDVTPQPHNGCRPPKRRRV.

A compositionally biased stretch (polar residues) spans 1 to 10 (MPPKSRSTGP). Disordered stretches follow at residues 1-27 (MPPK…IPHG) and 116-137 (GTIS…RRRV). Residues 12–21 (KTQKTRRRDK) are compositionally biased toward basic residues.

The protein belongs to the universal ribosomal protein uS11 family. Part of the 30S ribosomal subunit. Interacts with proteins S7 and S18. Binds to IF-3.

Its function is as follows. Located on the platform of the 30S subunit, it bridges several disparate RNA helices of the 16S rRNA. Forms part of the Shine-Dalgarno cleft in the 70S ribosome. This chain is Small ribosomal subunit protein uS11, found in Rhodococcus erythropolis (strain PR4 / NBRC 100887).